The chain runs to 309 residues: Malate dehydrogenase (309 aa).

NAD(+) contacts are provided by residues Gly-8–Gly-13 and Asp-33. 2 residues coordinate substrate: Arg-82 and Arg-88. NAD(+)-binding positions include Asn-95 and Val-118–Asn-120. Residues Asn-120 and Arg-151 each contribute to the substrate site. His-175 serves as the catalytic Proton acceptor.

The protein belongs to the LDH/MDH superfamily. MDH type 3 family.

It carries out the reaction (S)-malate + NAD(+) = oxaloacetate + NADH + H(+). Catalyzes the reversible oxidation of malate to oxaloacetate. The polypeptide is Malate dehydrogenase (Pseudomonas putida (strain GB-1)).